Reading from the N-terminus, the 244-residue chain is Glutathione S-transferase theta-2B (244 aa).

The 81-residue stretch at 2–82 (GLELFLDLVS…YLSCKYQTPD (81 aa)) folds into the GST N-terminal domain. Glutathione contacts are provided by residues 40-41 (HK), 53-54 (KL), 66-67 (ES), and 104-107 (DCIR). The 137-residue stretch at 88-224 (DLQARARVHE…SILEQAAKKT (137 aa)) folds into the GST C-terminal domain.

This sequence belongs to the GST superfamily. Theta family. As to quaternary structure, homodimer. As to expression, expressed at low levels in liver. In lung, expressed at low levels in ciliated bronchiolar cells, alveolar macrophages and alveolar type II cells.

The protein resides in the cytoplasm. It localises to the cytosol. The enzyme catalyses RX + glutathione = an S-substituted glutathione + a halide anion + H(+). In terms of biological role, conjugation of reduced glutathione to a wide number of exogenous and endogenous hydrophobic electrophiles. Has a sulfatase activity. The chain is Glutathione S-transferase theta-2B (GSTT2B) from Homo sapiens (Human).